A 952-amino-acid polypeptide reads, in one-letter code: Alpha-L-rhamnosidase (952 aa).

An N-terminal signal peptide occupies residues 1–21 (MKYNKLLFSLLLLAVFCFSCK). Alpha-L-rhamnose contacts are provided by residues aspartate 520, 524–525 (RE), aspartate 532, and tryptophan 594. The Proton donor role is filled by glutamate 525. Glutamate 809 serves as the catalytic Proton acceptor. Histidine 826 provides a ligand contact to alpha-L-rhamnose.

The protein belongs to the glycosyl hydrolase 78 family.

The protein localises to the cell membrane. The enzyme catalyses Hydrolysis of terminal non-reducing alpha-L-rhamnose residues in alpha-L-rhamnosides.. Alpha-L-rhamnosidase that may be involved in ulvan degradation. Ulvan is the main polysaccharide component of the Ulvales (green seaweed) cell wall. It is composed of disaccharide building blocks comprising 3-sulfated rhamnose (Rha3S) linked to D-glucuronic acid (GlcA), L-iduronic acid (IduA), or D-xylose (Xyl). This Formosa agariphila (strain DSM 15362 / KCTC 12365 / LMG 23005 / KMM 3901 / M-2Alg 35-1) protein is Alpha-L-rhamnosidase.